Reading from the N-terminus, the 208-residue chain is GTP-binding protein Rho1 (208 aa).

19 to 26 (GDGACGKT) provides a ligand contact to GTP. The Effector region motif lies at 41-49 (YVPTVFDNY). GTP contacts are provided by residues 66–70 (DTAGQ) and 124–127 (CKAD). Positions 188–208 (GKQGKSKPKTKSSKKKKCVVL) are disordered. Residues 191-208 (GKSKPKTKSSKKKKCVVL) are compositionally biased toward basic residues. Cysteine methyl ester is present on cysteine 205. Cysteine 205 is lipidated: S-geranylgeranyl cysteine. Positions 206 to 208 (VVL) are cleaved as a propeptide — removed in mature form.

It belongs to the small GTPase superfamily. Rho family.

It localises to the cell membrane. The chain is GTP-binding protein Rho1 (RHO1) from Kluyveromyces lactis (strain ATCC 8585 / CBS 2359 / DSM 70799 / NBRC 1267 / NRRL Y-1140 / WM37) (Yeast).